We begin with the raw amino-acid sequence, 2332 residues long: Genome polyprotein (2332 aa).

Positions 1–201 constitute a Peptidase C28 domain; it reads MNTTDCFIAL…WKAKVQRKLK (201 aa). The Cytoplasmic portion of the chain corresponds to 1–1480; sequence MNTTDCFIAL…SFVKRAFKRL (1480 aa). Residues cysteine 51, histidine 148, and aspartate 163 each act as for leader protease activity in the active site. 2 disordered regions span residues 197-218 and 238-265; these read QRKL…QSGN and QLGD…NTQN. Glycine 202 carries N-myristoyl glycine; by host lipidation. Composition is skewed to polar residues over residues 204–218 and 238–251; these read GQSS…QSGN and QLGD…SNEG. Low complexity predominate over residues 252–265; the sequence is STDTTSTHTTNTQN. Cysteine 406 and cysteine 858 are oxidised to a cystine. Residues 788–796 are antigenic epitope; it reads ALLRASTYY. The Cell attachment site motif lies at 869-871; the sequence is RGD. The 165-residue stretch at 1189–1353 folds into the SF3 helicase domain; the sequence is NVHIANLCKV…DGYKINSKLD (165 aa). ATP is bound at residue 1217-1224; it reads GKSGQGKS. Residues 1481–1501 lie within the membrane without spanning it; that stretch reads KENFEIVALCLTLLANIVIMI. Residues 1502-2332 lie on the Cytoplasmic side of the membrane; it reads RETRKRQKMV…RWVNAVCGDA (831 aa). Over residues 1529–1538 the composition is skewed to basic and acidic residues; it reads KTLDEAEKSP. The disordered stretch occupies residues 1529–1584; that stretch reads KTLDEAEKSPLETSGASTVGFRERTLPGQKACDDVNSEPAQPVEEQPQAEGPYAGP. O-(5'-phospho-RNA)-tyrosine is present on residues tyrosine 1581, tyrosine 1604, and tyrosine 1628. The region spanning 1652 to 1848 is the Peptidase C3 domain; the sequence is APPTDLQKMV…YCSCVSRSML (197 aa). Residue histidine 1695 is the For protease 3C activity; Proton donor/acceptor of the active site. Residues aspartate 1733 and cysteine 1812 each act as for protease 3C activity in the active site. 2 consecutive short sequence motifs (nuclear localization signal) follow at residues 1878–1886 and 1879–1886; these read MRKTKLAPT and RKTKLAPT. The RdRp catalytic domain occupies 2096-2214; that stretch reads RNVWDVDYSA…ASDYDLDFEA (119 aa). Aspartate 2200 functions as the For RdRp activity in the catalytic mechanism.

Belongs to the picornaviruses polyprotein family. As to quaternary structure, interacts with host ISG15. Interacts (via R-G-D motif) with host ITGAV/ITGB6. Interacts with host MAVS; this interaction inhibits binding of host TRAF3 to MAVS, thereby suppressing interferon-mediated responses. In terms of assembly, forms homooligomers. As to quaternary structure, homohexamer. Interacts with host VIM. Interacts with host BECN1. Interacts with host DCTN3. In terms of assembly, interacts with RNA-dependent RNA polymerase; this interaction allows 3B-1 to binds 2 polymerases and act as a primer. It also allows the recruitment of the RNA-dependent RNA polymerase to host membranes. As to quaternary structure, interacts with RNA-dependent RNA polymerase; this interaction allows 3B-2 to act as a primer. Interacts with RNA-dependent RNA polymerase; this interaction allows 3B-3 to act as a primer. In terms of assembly, interacts with 3B-1; this interaction allows 3B-1 to binds 2 polymerases and act as a primer. It also allows the recruitment of the RNA-dependent RNA polymerase to host membranes. Interacts with 3B-2; this interaction allows 3B-2 to act as a primer. Interacts with 3B-3; this interaction allows 3B-3 to act as a primer. Removes six residues from its own C-terminus, generating sLb(pro). In terms of processing, specific enzymatic cleavages in vivo by the viral proteases yield a variety of precursors and mature proteins. The polyprotein seems to be cotranslationally cleaved at the 2A/2B junction by a ribosomal skip from one codon to the next without formation of a peptide bond. This process would release the L-P1-2A peptide from the translational complex. Post-translationally, during virion maturation, immature virions are rendered infectious following cleavage of VP0 into VP4 and VP2. This maturation seems to be an autocatalytic event triggered by the presence of RNA in the capsid and is followed by a conformational change of the particle. Myristoylation is required during RNA encapsidation and formation of the mature virus particle. In terms of processing, uridylylated by the polymerase and covalently linked to the 5'-end of genomic RNA. These uridylylated forms act as a nucleotide-peptide primer for the polymerase. Post-translationally, the disulfide bond between VP1 and VP2 occurs after release of virus from the host cell.

The protein localises to the host nucleus. The protein resides in the host cytoplasm. It is found in the virion. It localises to the host endoplasmic reticulum membrane. Its subcellular location is the host cytoplasmic vesicle membrane. The enzyme catalyses Autocatalytically cleaves itself from the polyprotein of the foot-and-mouth disease virus by hydrolysis of a Lys-|-Gly bond, but then cleaves host cell initiation factor eIF-4G at bonds -Gly-|-Arg- and -Lys-|-Arg-.. The catalysed reaction is a ribonucleoside 5'-triphosphate + H2O = a ribonucleoside 5'-diphosphate + phosphate + H(+). It catalyses the reaction RNA(n) + a ribonucleoside 5'-triphosphate = RNA(n+1) + diphosphate. It carries out the reaction Selective cleavage of Gln-|-Gly bond in the poliovirus polyprotein. In other picornavirus reactions Glu may be substituted for Gln, and Ser or Thr for Gly.. In terms of biological role, autocatalytically cleaves itself from the polyprotein at the L/VP0 junction. Also cleaves the host translation initiation factors EIF4G1 and EIF4G3, in order to shut off the capped cellular mRNA transcription. Plays a role in counteracting host innate antiviral response using diverse mechanisms. Possesses a deubiquitinase activity acting on both 'Lys-48' and 'Lys-63'-linked polyubiquitin chains. In turn, inhibits the ubiquitination and subsequent activation of key signaling molecules of type I IFN response such as host RIGI, TBK1, TRAF3 and TRAF6. Inhibits host NF-kappa-B activity by inducing a decrease in RELA mRNA levels. Cleaves a peptide bond in the C-terminus of host ISG15, resulting in the damaging of this modifier that can no longer be attached to target proteins. Also cleaves host G3BP1 and G3BP2 in order to inhibit cytoplasmic stress granules assembly. Its function is as follows. Lies on the inner surface of the capsid shell. After binding to the host receptor, the capsid undergoes conformational changes. Capsid protein VP4 is released, capsid protein VP1 N-terminus is externalized, and together, they shape a pore in the host membrane through which the viral genome is translocated into the host cell cytoplasm. After genome has been released, the channel shrinks. Forms an icosahedral capsid of pseudo T=3 symmetry with capsid proteins VP1 and VP3. The capsid is composed of 60 copies of each capsid protein organized in the form of twelve pentamers and encloses the viral positive strand RNA genome. Upon acidifcation in the endosome, dissociates into pentamers. Functionally, forms an icosahedral capsid of pseudo T=3 symmetry with capsid proteins VP2 and VP3. The capsid is composed of 60 copies of each capsid protein organized in the form of twelve pentamers and encloses the viral positive strand RNA genome. Mediates cell entry by attachment to an integrin receptor, usually host ITGAV/ITGB6, via a conserved arginine-glycine-aspartic acid (R-G-D) motif. In addition, targets host MAVS to suppress type I IFN pathway. Upon acidifcation in the endosome, dissociates into pentamers. In terms of biological role, forms an icosahedral capsid of pseudo T=3 symmetry with capsid proteins VP0 and VP3. The capsid is composed of 60 copies of each capsid protein organized in the form of twelve pentamers and encloses the viral positive strand RNA genome. Upon acidifcation in the endosome, dissociates into pentamers. Its function is as follows. Mediates self-processing of the polyprotein by a translational effect termed 'ribosome skipping'. Mechanistically, 2A-mediated cleavage occurs between the C-terminal glycine and the proline of the downstream protein 2B. In the case of foot-and-mouth disease virus, the 2A oligopeptide is post-translationally 'trimmed' from the C-terminus of the upstream protein 1D by 3C proteinase. Plays an essential role in the virus replication cycle by acting as a viroporin. Creates a pore in the host endoplasmic reticulum and as a consequence releases Ca2+ in the cytoplasm of infected cell. In turn, high levels of cytoplasmic calcium may trigger membrane trafficking and transport of viral ER-associated proteins to viroplasms, sites of viral genome replication. Functionally, associates with and induces structural rearrangements of intracellular membranes. Triggers host autophagy by interacting with host BECN1 and thereby promotes viral replication. Participates in viral replication and interacts with host DHX9. Displays RNA-binding, nucleotide binding and NTPase activities. May play a role in virion morphogenesis and viral RNA encapsidation by interacting with the capsid protein VP3. In terms of biological role, plays important roles in virus replication, virulence and host range. Cooperates with host DDX56 to inhibit IRF3 nuclear translocation and subsequent type I interferon production. Its function is as follows. Covalently linked to the 5'-end of both the positive-strand and negative-strand genomic RNAs. Acts as a genome-linked replication primer. Cysteine protease that generates mature viral proteins from the precursor polyprotein. In addition to its proteolytic activity, binds to viral RNA and thus influences viral genome replication. RNA and substrate bind cooperatively to the protease. Functionally, RNA-directed RNA polymerase 3D-POL replicates genomic and antigenomic RNA by recognizing replications specific signals. Covalently attaches UMP to a tyrosine of VPg, which is used to prime RNA synthesis. The positive stranded RNA genome is first replicated at virus induced membranous vesicles, creating a dsRNA genomic replication form. This dsRNA is then used as template to synthesize positive stranded RNA genomes. ss(+)RNA genomes are either translated, replicated or encapsidated. The chain is Genome polyprotein from Bos taurus (Bovine).